Reading from the N-terminus, the 63-residue chain is Adipokinetic prohormone type 1 (63 aa).

An N-terminal signal peptide occupies residues 1 to 22 (MVQRCALVVLLVVAVAAALCSA). Pyrrolidone carboxylic acid is present on Gln23. Thr32 carries the post-translational modification Threonine amide.

The protein belongs to the AKH/HRTH/RPCH family.

The protein localises to the secreted. Functionally, this hormone, released from cells in the corpora cardiaca, causes release of diglycerides from the fat body and stimulation of muscles to use these diglycerides as an energy source during energy-demanding processes. This is Adipokinetic prohormone type 1 from Locusta migratoria (Migratory locust).